Consider the following 293-residue polypeptide: Acetylglutamate kinase (293 aa).

Residues 67–68, Arg-89, and Asn-190 contribute to the substrate site; that span reads GG.

It belongs to the acetylglutamate kinase family. ArgB subfamily.

It localises to the cytoplasm. The enzyme catalyses N-acetyl-L-glutamate + ATP = N-acetyl-L-glutamyl 5-phosphate + ADP. It participates in amino-acid biosynthesis; L-arginine biosynthesis; N(2)-acetyl-L-ornithine from L-glutamate: step 2/4. Functionally, catalyzes the ATP-dependent phosphorylation of N-acetyl-L-glutamate. This Nitrosospira multiformis (strain ATCC 25196 / NCIMB 11849 / C 71) protein is Acetylglutamate kinase.